A 464-amino-acid polypeptide reads, in one-letter code: Antithrombin-III (464 aa).

A signal peptide spans 1-32 (MYSNVIGTVTSGKRKVYLLSLLLIGFWDCVTC). Disulfide bonds link cysteine 40/cysteine 160 and cysteine 53/cysteine 127. Threonine 63 is subject to Phosphothreonine; by FAM20C. At serine 68 the chain carries Phosphoserine; by FAM20C. Heparin is bound at residue tryptophan 81. A glycan (N-linked (GlcNAc...) asparagine) is linked at asparagine 128. Heparin is bound at residue arginine 161. A glycan (N-linked (GlcNAc...) asparagine) is linked at asparagine 167. Arginine 177 is a heparin binding site. N-linked (GlcNAc...) (complex) asparagine glycosylation occurs at asparagine 187. Asparagine 224 is a glycosylation site (N-linked (GlcNAc...) asparagine). A disulfide bridge links cysteine 279 with cysteine 462.

The protein belongs to the serpin family. As to quaternary structure, forms protease inhibiting heterodimer with TMPRSS7. In terms of processing, phosphorylated by FAM20C in the extracellular medium. Found in plasma.

It localises to the secreted. Its subcellular location is the extracellular space. Most important serine protease inhibitor in plasma that regulates the blood coagulation cascade. AT-III inhibits thrombin, matriptase-3/TMPRSS7, as well as factors IXa, Xa and XIa. Its inhibitory activity is greatly enhanced in the presence of heparin. The chain is Antithrombin-III (SERPINC1) from Homo sapiens (Human).